The sequence spans 127 residues: Putative iron-sulfur cluster insertion protein ErpA (127 aa).

Residues 1 to 14 (MNTPFNDGSGQTDP) are compositionally biased toward polar residues. The tract at residues 1–20 (MNTPFNDGSGQTDPMTDIPT) is disordered. Positions 55, 119, and 121 each coordinate iron-sulfur cluster.

The protein belongs to the HesB/IscA family. As to quaternary structure, homodimer. The cofactor is iron-sulfur cluster.

Its function is as follows. Required for insertion of 4Fe-4S clusters. The chain is Putative iron-sulfur cluster insertion protein ErpA from Nitrosospira multiformis (strain ATCC 25196 / NCIMB 11849 / C 71).